Here is a 514-residue protein sequence, read N- to C-terminus: Cilia- and flagella-associated protein 53 (514 aa).

Coiled coils occupy residues 91-148 and 203-474; these read IINI…RQDF and KLWE…REFE.

It belongs to the CFAP53 family. As to quaternary structure, microtubule inner protein component of sperm flagellar doublet microtubules. Interacts with PIERCE1 and PIERCE2; the interactions link outer dynein arms docking complex (ODA-DC) to the internal microtubule inner proteins (MIP) in cilium axoneme. Interacts with CCDC38. Interacts with CCDC42 and IFT88. Interacts with centriolar satellite proteins PIBF1/CEP90 and PCM1. Interacts with dyneins DNAIC1, DNAIC2 AND DNAH11 and with ODA-DC component ODAD4/TTC25. Expressed in skin fibroblasts (at protein level). Expressed in nasal respiratory epithelial cells (at protein level). Expressed in airway epithelial cells.

The protein localises to the cytoplasm. It is found in the cytoskeleton. The protein resides in the cilium axoneme. Its subcellular location is the flagellum axoneme. It localises to the microtubule organizing center. The protein localises to the centrosome. It is found in the centriole. The protein resides in the centriolar satellite. Its subcellular location is the spindle pole. It localises to the cell projection. The protein localises to the cilium. Functionally, microtubule inner protein (MIP) part of the dynein-decorated doublet microtubules (DMTs) in cilia axoneme, which is required for motile cilia beating. Regulates motility patterns of both 9+0 and 9+2 motile cilia through differential localization and recruitment of axonemal dynein components. Required for centriolar satellite integrity and non-motile cilium assembly. Required for motile cilium formation. Through its role in the beating of primary cilia, involved in the establishment of organ laterality during embryogenesis. Required for sperm flagellum biogenesis and is essential for male fertility. This is Cilia- and flagella-associated protein 53 from Homo sapiens (Human).